The sequence spans 341 residues: ATP synthase subunit a 2 (341 aa).

The first 33 residues, 1–33, serve as a signal peptide directing secretion; the sequence is MKRVKVIQIKGFFRVMALLAPLLLNAYLPVQAS. 6 helical membrane passes run 112-132, 173-193, 195-215, 242-262, 273-293, and 307-327; these read VVML…VGAA, LPYL…GLIP, GATA…TFFI, WIIM…ALTV, IVIL…VAAA, and IFVA…FIGL.

Belongs to the ATPase A chain family. In terms of assembly, F-type ATPases have 2 components, CF(1) - the catalytic core - and CF(0) - the membrane proton channel. CF(1) has five subunits: alpha(3), beta(3), gamma(1), delta(1), epsilon(1). CF(0) has four main subunits: a, b, b' and c.

Its subcellular location is the cell inner membrane. Functionally, key component of the proton channel; it plays a direct role in the translocation of protons across the membrane. The polypeptide is ATP synthase subunit a 2 (Chlorobium luteolum (strain DSM 273 / BCRC 81028 / 2530) (Pelodictyon luteolum)).